Reading from the N-terminus, the 314-residue chain is Serine/threonine-protein phosphatase PP-Y (314 aa).

D60, H62, D88, and N120 together coordinate Mn(2+). H121 serves as the catalytic Proton donor. The Mn(2+) site is built by H169 and H244.

Belongs to the PPP phosphatase family. PP-Y subfamily. The cofactor is Mn(2+).

It catalyses the reaction O-phospho-L-seryl-[protein] + H2O = L-seryl-[protein] + phosphate. It carries out the reaction O-phospho-L-threonyl-[protein] + H2O = L-threonyl-[protein] + phosphate. This is Serine/threonine-protein phosphatase PP-Y (PpY-55A) from Drosophila melanogaster (Fruit fly).